Reading from the N-terminus, the 464-residue chain is tRNA-2-methylthio-N(6)-dimethylallyladenosine synthase (464 aa).

The 117-residue stretch at 19–135 (GSYWITTFGC…LENLLERVDL (117 aa)) folds into the MTTase N-terminal domain. 6 residues coordinate [4Fe-4S] cluster: Cys28, Cys64, Cys98, Cys170, Cys174, and Cys177. The Radical SAM core domain occupies 156–393 (RDSSICGWVN…NELVETTSRK (238 aa)). Residues 396–464 (QRYLNNIESV…SFSLSGQIYK (69 aa)) form the TRAM domain.

Belongs to the methylthiotransferase family. MiaB subfamily. As to quaternary structure, monomer. The cofactor is [4Fe-4S] cluster.

It is found in the cytoplasm. The enzyme catalyses N(6)-dimethylallyladenosine(37) in tRNA + (sulfur carrier)-SH + AH2 + 2 S-adenosyl-L-methionine = 2-methylsulfanyl-N(6)-dimethylallyladenosine(37) in tRNA + (sulfur carrier)-H + 5'-deoxyadenosine + L-methionine + A + S-adenosyl-L-homocysteine + 2 H(+). Catalyzes the methylthiolation of N6-(dimethylallyl)adenosine (i(6)A), leading to the formation of 2-methylthio-N6-(dimethylallyl)adenosine (ms(2)i(6)A) at position 37 in tRNAs that read codons beginning with uridine. The protein is tRNA-2-methylthio-N(6)-dimethylallyladenosine synthase of Prochlorococcus marinus subsp. pastoris (strain CCMP1986 / NIES-2087 / MED4).